We begin with the raw amino-acid sequence, 395 residues long: General transcription factor IIH subunit 2 (395 aa).

A VWFA domain is found at 60–236 (HLYVVVDGSR…HYKELLTHHV (177 aa)). Tyr-95 bears the Phosphotyrosine mark. Residues 291 to 308 (CPQCRAKYCELPVECKIC) form a C4-type zinc finger.

Belongs to the GTF2H2 family. Component of the TFIID-containing RNA polymerase II pre-initiation complex that is composed of TBP and at least GTF2A1, GTF2A2, GTF2E1, GTF2E2, GTF2F1, GTF2H2, GTF2H3, GTF2H4, GTF2H5, GTF2B, TCEA1, ERCC2 and ERCC3. Component of the 7-subunit TFIIH core complex composed of XPB/ERCC3, XPD/ERCC2, GTF2H1, GTF2H2, GTF2H3, GTF2H4 and GTF2H5, which is active in NER. The core complex associates with the 3-subunit CDK-activating kinase (CAK) module composed of CCNH/cyclin H, CDK7 and MNAT1 to form the 10-subunit holoenzyme (holo-TFIIH) active in transcription. Interacts with XPB, XPD, GTF2H1 and GTF2H3. As to quaternary structure, (Microbial infection) Interacts with varicella-zoster virus IE63 protein. As to expression, widely expressed, with higher expression in skeletal muscle.

The protein localises to the nucleus. Its function is as follows. Component of the general transcription and DNA repair factor IIH (TFIIH) core complex, which is involved in general and transcription-coupled nucleotide excision repair (NER) of damaged DNA and, when complexed to CAK, in RNA transcription by RNA polymerase II. In NER, TFIIH acts by opening DNA around the lesion to allow the excision of the damaged oligonucleotide and its replacement by a new DNA fragment. In transcription, TFIIH has an essential role in transcription initiation. When the pre-initiation complex (PIC) has been established, TFIIH is required for promoter opening and promoter escape. Phosphorylation of the C-terminal tail (CTD) of the largest subunit of RNA polymerase II by the kinase module CAK controls the initiation of transcription. The N-terminus of GTF2H2 interacts with and regulates XPD whereas an intact C-terminus is required for a successful escape of RNAP II form the promoter. The polypeptide is General transcription factor IIH subunit 2 (GTF2H2) (Homo sapiens (Human)).